The primary structure comprises 436 residues: Xylose isomerase (436 aa).

Catalysis depends on residues His100 and Asp103. Mg(2+)-binding residues include Glu231, Glu267, His270, Asp295, Asp306, Asp308, and Asp338.

Belongs to the xylose isomerase family. As to quaternary structure, homotetramer. The cofactor is Mg(2+).

It localises to the cytoplasm. The catalysed reaction is alpha-D-xylose = alpha-D-xylulofuranose. This chain is Xylose isomerase, found in Ruegeria sp. (strain TM1040) (Silicibacter sp.).